We begin with the raw amino-acid sequence, 278 residues long: 4-deoxy-L-threo-5-hexosulose-uronate ketol-isomerase (278 aa).

The Zn(2+) site is built by His196, His198, Glu203, and His245.

Belongs to the KduI family. It depends on Zn(2+) as a cofactor.

The enzyme catalyses 5-dehydro-4-deoxy-D-glucuronate = 3-deoxy-D-glycero-2,5-hexodiulosonate. The protein operates within glycan metabolism; pectin degradation; 2-dehydro-3-deoxy-D-gluconate from pectin: step 4/5. Catalyzes the isomerization of 5-dehydro-4-deoxy-D-glucuronate to 3-deoxy-D-glycero-2,5-hexodiulosonate. The protein is 4-deoxy-L-threo-5-hexosulose-uronate ketol-isomerase of Shigella boydii serotype 4 (strain Sb227).